A 296-amino-acid polypeptide reads, in one-letter code: MCAERLGQFVTLALVFATLDPAQGTDSTNPPEGPQDRSSQQKGRLSLQNTAEIQHCLVNAGDVGCGVFECFENNSCEIQGLHGICMTFLHNAGKFDAQGKSFIKDALRCKAHALRHKFGCISRKCPAIREMVFQLQRECYLKHDLCSAAQENVGVIVEMIHFKDLLLHEPYVDLVNLLLTCGEDVKEAVTRSVQAQCEQSWGGLCSILSFCTSNIQRPPTAAPEHQPLADRAQLSRPHHRDTDHHLTANRGAKGERGSKSHPNAHARGRTGGQSAQGPSGSSEWEDEQSEYSDIRR.

Positions 1 to 24 are cleaved as a signal peptide; that stretch reads MCAERLGQFVTLALVFATLDPAQG. A disordered region spans residues 21 to 44; the sequence is PAQGTDSTNPPEGPQDRSSQQKGR. Residues 24–44 are compositionally biased toward polar residues; that stretch reads GTDSTNPPEGPQDRSSQQKGR. Residue Asn73 is glycosylated (N-linked (GlcNAc...) asparagine). The disordered stretch occupies residues 218-296; that stretch reads PPTAAPEHQP…EQSEYSDIRR (79 aa). Positions 240 to 258 are enriched in basic and acidic residues; the sequence is RDTDHHLTANRGAKGERGS. The span at 272-282 shows a compositional bias: low complexity; it reads GQSAQGPSGSS.

The protein belongs to the stanniocalcin family. In terms of assembly, homodimer; disulfide-linked. As to expression, found in a variety of tissues including skeletal muscle, small intestine, kidney, liver and brain.

It is found in the secreted. In terms of biological role, has an anti-hypocalcemic action on calcium and phosphate homeostasis. The protein is Stanniocalcin-2 (Stc2) of Mus musculus (Mouse).